The primary structure comprises 439 residues: 23S rRNA (uracil(1939)-C(5))-methyltransferase RlmD (439 aa).

Residues 5–63 enclose the TRAM domain; the sequence is RKLEHKTYKLNIESFSHEGRGIAHFEDKIIFVSDALPGELVIANRTFSCAKFEEADAKE. Positions 76, 82, 85, and 164 each coordinate [4Fe-4S] cluster. S-adenosyl-L-methionine is bound by residues Q271, F300, N305, E321, D348, and D370. C396 serves as the catalytic Nucleophile.

Belongs to the class I-like SAM-binding methyltransferase superfamily. RNA M5U methyltransferase family. RlmD subfamily.

The enzyme catalyses uridine(1939) in 23S rRNA + S-adenosyl-L-methionine = 5-methyluridine(1939) in 23S rRNA + S-adenosyl-L-homocysteine + H(+). Its function is as follows. Catalyzes the formation of 5-methyl-uridine at position 1939 (m5U1939) in 23S rRNA. The polypeptide is 23S rRNA (uracil(1939)-C(5))-methyltransferase RlmD (Vesicomyosocius okutanii subsp. Calyptogena okutanii (strain HA)).